A 316-amino-acid chain; its full sequence is HPr kinase/phosphorylase (316 aa).

Active-site residues include histidine 146 and lysine 167. Residue 161-168 (GESGLGKS) participates in ATP binding. Serine 168 contributes to the Mg(2+) binding site. Aspartate 185 acts as the Proton acceptor; for phosphorylation activity. Proton donor; for dephosphorylation activity in catalysis. The interval 209–218 (LEVRGIGLLD) is important for the catalytic mechanism of both phosphorylation and dephosphorylation. A Mg(2+)-binding site is contributed by glutamate 210. The active site involves arginine 252. Residues 273-278 (QVEAGR) are important for the catalytic mechanism of dephosphorylation.

Belongs to the HPrK/P family. In terms of assembly, homohexamer. The cofactor is Mg(2+).

The enzyme catalyses [HPr protein]-L-serine + ATP = [HPr protein]-O-phospho-L-serine + ADP + H(+). The catalysed reaction is [HPr protein]-O-phospho-L-serine + phosphate + H(+) = [HPr protein]-L-serine + diphosphate. In terms of biological role, catalyzes the ATP- as well as the pyrophosphate-dependent phosphorylation of a specific serine residue in HPr, a phosphocarrier protein of the phosphoenolpyruvate-dependent sugar phosphotransferase system (PTS). HprK/P also catalyzes the pyrophosphate-producing, inorganic phosphate-dependent dephosphorylation (phosphorolysis) of seryl-phosphorylated HPr (P-Ser-HPr). The chain is HPr kinase/phosphorylase from Polaromonas naphthalenivorans (strain CJ2).